A 676-amino-acid chain; its full sequence is Probable ERAD-associated E3 ubiquitin-protein ligase ASI1 (676 aa).

The Perinuclear space portion of the chain corresponds to Met1–Arg78. Residues Asn24, Asn34, Asn46, and Asn66 are each glycosylated (N-linked (GlcNAc...) asparagine). A helical membrane pass occupies residues Met79–Leu99. The Nuclear segment spans residues Asn100 to His126. A helical membrane pass occupies residues Leu127–Met147. At His148 to Asp156 the chain is on the perinuclear space side. A helical transmembrane segment spans residues Phe157 to Ser177. Residues Ser178 to Asn181 lie on the Nuclear side of the membrane. The chain crosses the membrane as a helical span at residues Val182–Ile202. At Ser203 to Pro277 the chain is on the perinuclear space side. The helical transmembrane segment at Gly278–Phe298 threads the bilayer. The Nuclear segment spans residues Thr299 to Val676. The RING-type; atypical zinc-finger motif lies at Cys624 to Asp664.

As to quaternary structure, component of the Asi complex, which contains ASI1, ASI2 and ASI3. Interacts directly with ASI1.

It localises to the nucleus inner membrane. It carries out the reaction S-ubiquitinyl-[E2 ubiquitin-conjugating enzyme]-L-cysteine + [acceptor protein]-L-lysine = [E2 ubiquitin-conjugating enzyme]-L-cysteine + N(6)-ubiquitinyl-[acceptor protein]-L-lysine.. In terms of biological role, part of the nuclear inner membrane (INM)-specific branch of the ER-associated degradation (ERAD) pathway, required for the elimination of misfolded proteins in the INM, a specialized ER subdomain. Required for ERG11 degradation. Negative regulator of SPS-sensor signaling. Together with ASI2 and ASI3, prevents the unprocessed precursor forms of STP1 and STP2 that escape cytoplasmic anchoring from inducing SPS-sensor-regulated genes in the absence of inducing signals. Controls amino acid permease (AAP) gene expression in response to amino acid availability, a process mediated by the transcription factors STP1 and STP1. This Saccharomyces cerevisiae (strain ATCC 204508 / S288c) (Baker's yeast) protein is Probable ERAD-associated E3 ubiquitin-protein ligase ASI1 (ASI3).